Reading from the N-terminus, the 525-residue chain is Lysine--tRNA ligase (525 aa).

Residues glutamate 430 and glutamate 437 each contribute to the Mg(2+) site.

Belongs to the class-II aminoacyl-tRNA synthetase family. Homodimer. Mg(2+) serves as cofactor.

The protein resides in the cytoplasm. The enzyme catalyses tRNA(Lys) + L-lysine + ATP = L-lysyl-tRNA(Lys) + AMP + diphosphate. The protein is Lysine--tRNA ligase of Chlamydia caviae (strain ATCC VR-813 / DSM 19441 / 03DC25 / GPIC) (Chlamydophila caviae).